A 117-amino-acid polypeptide reads, in one-letter code: Circadian clock oscillator protein KaiB (117 aa).

Belongs to the KaiB family. May undergo a major conformational rearrangment; in the free state forms homooligomers. When bound to KaiC switches to a monomeric thioredoxin-fold (KaiB(fs)). The active oscillator complex is probably KaiC(6):KaiB(6).

In terms of biological role, component of the KaiBC clock protein complex, which constitutes the main circadian regulator in cyanobacteria; it may modify the ATPase activity of KaiC. Its function is as follows. May be a metamorphic protein which reversibly switches between an inactive tetrameric fold and a rare, thioredoxin-like monomeric fold (KaiB(fs)). KaiB(fs) binds phospho-KaiC, and perhaps clock output effectors. This Prochlorococcus marinus (strain SARG / CCMP1375 / SS120) protein is Circadian clock oscillator protein KaiB.